The chain runs to 124 residues: MLTEFKQFIARGNVIDLAVGVIIGAAFTAIVQSLVKNLINPLIGIFVGKIDLSNLVFKAGDATFKYGSFINSVINFLIISFVVFLIVKAVNKITKKEEEEKPDTPTETDYLKEIRDLLKEKETK.

The next 3 membrane-spanning stretches (helical) occupy residues Val14–Leu34, Asn37–Phe57, and Gly67–Val87.

Belongs to the MscL family. In terms of assembly, homopentamer.

The protein localises to the cell membrane. In terms of biological role, channel that opens in response to stretch forces in the membrane lipid bilayer. May participate in the regulation of osmotic pressure changes within the cell. This Lactobacillus acidophilus (strain ATCC 700396 / NCK56 / N2 / NCFM) protein is Large-conductance mechanosensitive channel.